We begin with the raw amino-acid sequence, 189 residues long: FUN14 domain-containing protein 2 (189 aa).

Topologically, residues 1–80 (METSAPRAGS…GQESGPSAEK (80 aa)) are cytoplasmic. A phosphoserine mark is found at S10 and S53. A helical membrane pass occupies residues 81–101 (YSVATQLFIGGVTGWCTGFIF). Over 102-107 (QKVGKL) the chain is Mitochondrial intermembrane. Residues 108–128 (AATAVGGGFFLLQLANHTGYI) form a helical membrane-spanning segment. Topologically, residues 129–164 (KVDWQRVEKDMKKAKEQLKIRKSNQIPTEVRSKAEE) are cytoplasmic. The residue at position 151 (S151) is a Phosphoserine. A helical transmembrane segment spans residues 165–185 (VVSFVKKNVLVTGGFFGGFLL). Residues 186-189 (GMAS) are Mitochondrial intermembrane-facing.

The protein belongs to the FUN14 family. Highly expressed in platelets (at protein level).

It localises to the mitochondrion outer membrane. The protein resides in the nucleus. In terms of biological role, binds directly and specifically 1,2-Diacyl-sn-glycero-3-phospho-(1'-myo-inositol-3',4',5'-bisphosphate) (PIP3) leading to the recruitment of PIP3 to mitochondria and may play a role in the regulation of the platelet activation via AKT/GSK3B/cGMP signaling pathways. May act as transcription factor that regulates SREBP1 (isoform SREBP-1C) expression in order to modulate triglyceride (TG) homeostasis in hepatocytes. The sequence is that of FUN14 domain-containing protein 2 from Homo sapiens (Human).